The sequence spans 385 residues: 8-amino-7-oxononanoate synthase (385 aa).

A substrate-binding site is contributed by Arg-21. Residue Gly-108–Phe-109 coordinates pyridoxal 5'-phosphate. His-133 is a substrate binding site. 3 residues coordinate pyridoxal 5'-phosphate: Ser-179, His-207, and Thr-233. Position 236 is an N6-(pyridoxal phosphate)lysine (Lys-236). Thr-352 provides a ligand contact to substrate.

It belongs to the class-II pyridoxal-phosphate-dependent aminotransferase family. BioF subfamily. In terms of assembly, homodimer. Pyridoxal 5'-phosphate is required as a cofactor.

The catalysed reaction is 6-carboxyhexanoyl-[ACP] + L-alanine + H(+) = (8S)-8-amino-7-oxononanoate + holo-[ACP] + CO2. It functions in the pathway cofactor biosynthesis; biotin biosynthesis. In terms of biological role, catalyzes the decarboxylative condensation of pimeloyl-[acyl-carrier protein] and L-alanine to produce 8-amino-7-oxononanoate (AON), [acyl-carrier protein], and carbon dioxide. The sequence is that of 8-amino-7-oxononanoate synthase from Salmonella arizonae (strain ATCC BAA-731 / CDC346-86 / RSK2980).